The sequence spans 262 residues: Glucosamine-6-phosphate deaminase (262 aa).

D63 (proton acceptor; for enolization step) is an active-site residue. N129 functions as the For ring-opening step in the catalytic mechanism. H131 functions as the Proton acceptor; for ring-opening step in the catalytic mechanism. E136 (for ring-opening step) is an active-site residue.

Belongs to the glucosamine/galactosamine-6-phosphate isomerase family. NagB subfamily.

It catalyses the reaction alpha-D-glucosamine 6-phosphate + H2O = beta-D-fructose 6-phosphate + NH4(+). The protein operates within amino-sugar metabolism; N-acetylneuraminate degradation; D-fructose 6-phosphate from N-acetylneuraminate: step 5/5. Its function is as follows. Catalyzes the reversible isomerization-deamination of glucosamine 6-phosphate (GlcN6P) to form fructose 6-phosphate (Fru6P) and ammonium ion. The sequence is that of Glucosamine-6-phosphate deaminase from Bacillus cytotoxicus (strain DSM 22905 / CIP 110041 / 391-98 / NVH 391-98).